The sequence spans 250 residues: MRLLQVTALFFLLSNSLCRGENSKALTETSTTKASATTPDMVSITNKSTGGTPPKGTTNSATPKTPLMPALDSPTTPKHETTTRGVIKNEVSTIKTTVANPTISNAVSTLSSPQNKTENQSSIRTTEISGTNQLPDDQKPKTTETPSASLTTAKTISQIQDTEDGKITATTSTTPSYSSVILPVVIALIVITVLVFTLVGLYRICWKRDPGTPESGNDQPQSDKESVKLLTVKTISHESGEHSAQGKAKN.

An N-terminal signal peptide occupies residues 1-20; that stretch reads MRLLQVTALFFLLSNSLCRG. Composition is skewed to low complexity over residues 24-38 and 45-60; these read KALTETSTTKASATT and TNKSTGGTPPKGTTNS. Disordered regions lie at residues 24-83 and 105-153; these read KALT…ETTT and NAVS…LTTA. Asn46, Asn115, and Asn119 each carry an N-linked (GlcNAc...) asparagine glycan. Composition is skewed to polar residues over residues 105–135 and 143–153; these read NAVSTLSSPQNKTENQSSIRTTEISGTNQLP and TETPSASLTTA. The helical transmembrane segment at 180-200 threads the bilayer; it reads VILPVVIALIVITVLVFTLVG. Residues 210-250 are disordered; the sequence is PGTPESGNDQPQSDKESVKLLTVKTISHESGEHSAQGKAKN. Phosphoserine is present on Ser226.

In terms of processing, highly O-glycosylated. Sialic acid-rich glycoprotein.

The protein resides in the membrane. Functionally, endothelial sialomucin, also called endomucin or mucin-like sialoglycoprotein, which interferes with the assembly of focal adhesion complexes and inhibits interaction between cells and the extracellular matrix. The chain is Endomucin (Emcn) from Rattus norvegicus (Rat).